A 204-amino-acid polypeptide reads, in one-letter code: Venom allergen 5 (204 aa).

4 cysteine pairs are disulfide-bonded: C4–C17, C8–C101, C26–C94, and C170–C187. The SCP domain occupies 45–189; that stretch reads LKEHNDFRQK…WHKHYLVCNY (145 aa).

This sequence belongs to the CRISP family. Venom allergen 5-like subfamily. Expressed by the venom gland.

The protein localises to the secreted. This is Venom allergen 5 from Vespula pensylvanica (Western yellow jacket).